A 461-amino-acid polypeptide reads, in one-letter code: Deoxyhypusine synthase (461 aa).

Residues 166–167 (EH), Glu-331, His-377, 403–405 (GSD), and 412–418 (EAVSWGK) each bind spermidine. The active-site Nucleophile is the Lys-418. Residues 428-448 (VYSEVTIVFPLIVVHVFVAWV) form a helical membrane-spanning segment.

This sequence belongs to the deoxyhypusine synthase family. Heterotetramer formed by a homodimer of the non-catalytic regulatory subunit DHSp and a homodimer of the catalytic subunit DHSc where DHSc appears to bind spermidine and DHSp appears to bind NAD(+). It depends on NAD(+) as a cofactor.

It is found in the membrane. It catalyses the reaction [eIF5A protein]-L-lysine + spermidine = [eIF5A protein]-deoxyhypusine + propane-1,3-diamine. The protein operates within protein modification; eIF5A hypusination. With respect to regulation, allosterically activated by DHSp. Inhibited by spermididine analog N1-guanyl-1,7-diamineoheptane (GC7). Functionally, in association with the non-catalytic regulatory subunit DHSp, catalyzes the NAD-dependent oxidative cleavage of spermidine and the subsequent transfer of the butylamine moiety of spermidine to the epsilon-amino group of a specific lysine residue of the eIF5A precursor protein to form the intermediate deoxyhypusine residue. Regulates protein levels of its regulatory subunit DHSp. Required for cell growth and survival. The chain is Deoxyhypusine synthase from Trypanosoma brucei brucei (strain 927/4 GUTat10.1).